A 500-amino-acid polypeptide reads, in one-letter code: Endothelial lipase (500 aa).

A signal peptide spans 1 to 20 (MSNSVPLLCFWSLCYCFAAG). A disulfide bridge links Cys64 with Cys77. Residues Asn80 and Asn136 are each glycosylated (N-linked (GlcNAc...) asparagine). Ser169 (nucleophile) is an active-site residue. Residue Asp193 is the Charge relay system of the active site. Cysteines 252 and 272 form a disulfide. His274 (charge relay system) is an active-site residue. 2 cysteine pairs are disulfide-bonded: Cys297/Cys316 and Cys308/Cys311. Residue 325–337 (KMRNKRNSKMYLK) coordinates heparin. One can recognise a PLAT domain in the interval 347–482 (YHYQMKIHVF…SPGRELWFRK (136 aa)). N-linked (GlcNAc...) asparagine glycosylation is found at Asn393, Asn469, and Asn491. Cys463 and Cys483 are disulfide-bonded.

It belongs to the AB hydrolase superfamily. Lipase family. Head to tail homodimer. In terms of tissue distribution, high level of expression in the liver, placenta, lung, thyroid, kidney, testis and in the corpus luteum of the ovary. Expressed also in coronary artery endothelial cells, umbilical vein endothelial cells and in hepatocytes and osteosarcoma cell lines. Not detected in heart, brain and muscle.

It localises to the secreted. It catalyses the reaction a triacylglycerol + H2O = a diacylglycerol + a fatty acid + H(+). It carries out the reaction a 1,2-diacyl-sn-glycero-3-phosphocholine + H2O = a 2-acyl-sn-glycero-3-phosphocholine + a fatty acid + H(+). The catalysed reaction is 1,2,3-tri-(9Z-octadecenoyl)-glycerol + H2O = di-(9Z)-octadecenoylglycerol + (9Z)-octadecenoate + H(+). The enzyme catalyses 1,2,3-tributanoylglycerol + H2O = dibutanoylglycerol + butanoate + H(+). It catalyses the reaction 1,2-dihexadecanoyl-sn-glycero-3-phosphocholine + H2O = hexadecanoyl-sn-glycero-3-phosphocholine + hexadecanoate + H(+). Its activity is regulated as follows. Inhibited by serum and NaCl. Functionally, exerts both phospholipase and triglyceride lipase activities. More active as a phospholipase than a triglyceride lipase. Hydrolyzes triglycerides, both with short-chain fatty acyl groups (tributyrin) and long-chain fatty acyl groups (triolein) with similar levels of activity toward both types of substrates. Hydrolyzes high density lipoproteins (HDL) more efficiently than other lipoproteins. This chain is Endothelial lipase (LIPG), found in Homo sapiens (Human).